A 429-amino-acid polypeptide reads, in one-letter code: Enolase (429 aa).

Residue glutamine 162 participates in (2R)-2-phosphoglycerate binding. The active-site Proton donor is glutamate 204. Mg(2+)-binding residues include aspartate 241, glutamate 283, and aspartate 310. (2R)-2-phosphoglycerate-binding residues include lysine 335, arginine 364, serine 365, and lysine 386. Residue lysine 335 is the Proton acceptor of the active site.

This sequence belongs to the enolase family. Mg(2+) serves as cofactor.

Its subcellular location is the cytoplasm. It localises to the secreted. The protein localises to the cell surface. It catalyses the reaction (2R)-2-phosphoglycerate = phosphoenolpyruvate + H2O. The protein operates within carbohydrate degradation; glycolysis; pyruvate from D-glyceraldehyde 3-phosphate: step 4/5. Catalyzes the reversible conversion of 2-phosphoglycerate (2-PG) into phosphoenolpyruvate (PEP). It is essential for the degradation of carbohydrates via glycolysis. The chain is Enolase from Mycobacterium leprae (strain TN).